The primary structure comprises 301 residues: 2-aminobenzoylacetyl-CoA thioesterase (301 aa).

7 residues coordinate Fe cation: histidine 69, histidine 71, aspartate 73, histidine 74, histidine 159, aspartate 178, and histidine 221.

This sequence belongs to the metallo-beta-lactamase superfamily.

It carries out the reaction (2-aminobenzoyl)acetyl-CoA + H2O = (2-aminobenzoyl)acetate + CoA + H(+). Thioesterase activity, but not pyocyanine production, is inhibited by 2-(pyridin-3-yl)benzoic acid, 2-(1H-pyrrol-1-yl)benzoic acid and 3-methylthiophene-2-carboxylic acid. Compounds bind to the active center. Functionally, required for the biosynthesis of the quorum-sensing signaling molecules 2-heptyl-4(1H)-quinolone (HHQ) and 2-heptyl-3-hydroxy-4(1H)-quinolone (Pseudomonas quinolone signal or PQS), which are important for biofilm formation and virulence. Catalyzes the hydrolysis of the intermediate 2-aminobenzoylacetyl-CoA (2-ABA-CoA) to form 2-aminobenzoylacetate (2-ABA), the precursor of HHQ. In vitro, can also hydrolyze other substrates such as S-ethyl-acetothioacetate and acetoacetyl-CoA, but is inactive against anthraniloyl-CoA, malonyl-CoA and octanoyl-CoA. Beyond its thioesterase function, is involved in the regulation of diverse genes coding for key virulence determinants and biofilm development. In Pseudomonas aeruginosa (strain ATCC 15692 / DSM 22644 / CIP 104116 / JCM 14847 / LMG 12228 / 1C / PRS 101 / PAO1), this protein is 2-aminobenzoylacetyl-CoA thioesterase.